A 329-amino-acid polypeptide reads, in one-letter code: Glycerol-3-phosphate dehydrogenase [NAD(P)+] (329 aa).

Positions 14, 34, and 108 each coordinate NADPH. The sn-glycerol 3-phosphate site is built by Lys-108, Gly-137, and Ser-139. Ala-141 is a binding site for NADPH. Sn-glycerol 3-phosphate is bound by residues Lys-192, Asp-245, Ser-255, Arg-256, and Asn-257. Lys-192 serves as the catalytic Proton acceptor. Arg-256 contributes to the NADPH binding site. 2 residues coordinate NADPH: Ile-280 and Glu-282.

This sequence belongs to the NAD-dependent glycerol-3-phosphate dehydrogenase family.

The protein localises to the cytoplasm. It catalyses the reaction sn-glycerol 3-phosphate + NAD(+) = dihydroxyacetone phosphate + NADH + H(+). The catalysed reaction is sn-glycerol 3-phosphate + NADP(+) = dihydroxyacetone phosphate + NADPH + H(+). It functions in the pathway membrane lipid metabolism; glycerophospholipid metabolism. In terms of biological role, catalyzes the reduction of the glycolytic intermediate dihydroxyacetone phosphate (DHAP) to sn-glycerol 3-phosphate (G3P), the key precursor for phospholipid synthesis. The protein is Glycerol-3-phosphate dehydrogenase [NAD(P)+] of Wigglesworthia glossinidia brevipalpis.